Consider the following 90-residue polypeptide: Co-chaperonin GroES (90 aa).

The protein belongs to the GroES chaperonin family. In terms of assembly, heptamer of 7 subunits arranged in a ring. Interacts with the chaperonin GroEL.

It localises to the cytoplasm. Its function is as follows. Together with the chaperonin GroEL, plays an essential role in assisting protein folding. The GroEL-GroES system forms a nano-cage that allows encapsulation of the non-native substrate proteins and provides a physical environment optimized to promote and accelerate protein folding. GroES binds to the apical surface of the GroEL ring, thereby capping the opening of the GroEL channel. In Phocaeicola vulgatus (strain ATCC 8482 / DSM 1447 / JCM 5826 / CCUG 4940 / NBRC 14291 / NCTC 11154) (Bacteroides vulgatus), this protein is Co-chaperonin GroES.